An 84-amino-acid polypeptide reads, in one-letter code: U21-theraphotoxin-Cg1a 2 (84 aa).

The first 21 residues, 1–21 (MKVSVLITLAVLGVMFLFTSA), serve as a signal peptide directing secretion. A propeptide spanning residues 22–47 (EERGSDQMDSPAWLKSMEIIFQSEER) is cleaved from the precursor. Cystine bridges form between C49-C63, C56-C68, and C62-C76. A Valine amide modification is found at V82.

The protein belongs to the neurotoxin 10 (Hwtx-1) family. 05 (F4a) subfamily. As to expression, expressed by the venom gland.

The protein localises to the secreted. In terms of biological role, probable ion channel inhibitor. In Chilobrachys guangxiensis (Chinese earth tiger tarantula), this protein is U21-theraphotoxin-Cg1a 2.